The primary structure comprises 122 residues: Putative iron-sulfur cluster insertion protein ErpA (122 aa).

3 residues coordinate iron-sulfur cluster: Cys-50, Cys-114, and Cys-116.

This sequence belongs to the HesB/IscA family. As to quaternary structure, homodimer. The cofactor is iron-sulfur cluster.

Its function is as follows. Required for insertion of 4Fe-4S clusters. The polypeptide is Putative iron-sulfur cluster insertion protein ErpA (Burkholderia mallei (strain NCTC 10247)).